Consider the following 220-residue polypeptide: Ribosomal RNA large subunit methyltransferase E (220 aa).

Glycine 64, tryptophan 66, aspartate 84, aspartate 100, and aspartate 125 together coordinate S-adenosyl-L-methionine. Catalysis depends on lysine 165, which acts as the Proton acceptor.

It belongs to the class I-like SAM-binding methyltransferase superfamily. RNA methyltransferase RlmE family.

Its subcellular location is the cytoplasm. It carries out the reaction uridine(2552) in 23S rRNA + S-adenosyl-L-methionine = 2'-O-methyluridine(2552) in 23S rRNA + S-adenosyl-L-homocysteine + H(+). Functionally, specifically methylates the uridine in position 2552 of 23S rRNA at the 2'-O position of the ribose in the fully assembled 50S ribosomal subunit. The polypeptide is Ribosomal RNA large subunit methyltransferase E (Thiobacillus denitrificans (strain ATCC 25259 / T1)).